The sequence spans 328 residues: Sin3 histone deacetylase corepressor complex component SDS3 (328 aa).

Over residues 1–16 (MSAAGLLAPAPAQAGA) the composition is skewed to low complexity. Positions 1–65 (MSAAGLLAPA…DLAKHDEEDY (65 aa)) are disordered. The residue at position 2 (serine 2) is an N-acetylserine. A mediates interaction with USP17L2 region spans residues 2 to 170 (SAAGLLAPAP…IENEKLTMEL (169 aa)). 2 stretches are compositionally biased toward acidic residues: residues 23–37 (YPEE…EEDE) and 45–54 (SDEDTEDASE). Residues serine 32 and serine 45 each carry the phosphoserine modification. Threonine 49 is modified (phosphothreonine). Serine 53 is modified (phosphoserine). Residues 56-65 (DLAKHDEEDY) show a composition bias toward basic and acidic residues. A coiled-coil region spans residues 66 to 171 (VEMKEQMYQD…ENEKLTMELT (106 aa)). Residues lysine 69, lysine 178, and lysine 201 each participate in a glycyl lysine isopeptide (Lys-Gly) (interchain with G-Cter in SUMO2) cross-link. The tract at residues 188–226 (RPNDPVPIPDKRRKPAPAQLNYLLTDEQIMEDLRTLNKL) is sin3 interaction domain (SID). The segment at 226–252 (LKSPKRPASPSSPEHLPATPAESPAQR) is disordered. A phosphoserine mark is found at serine 228, serine 234, and serine 237. Threonine 244 carries the phosphothreonine modification.

This sequence belongs to the SDS3 family. Interacts with HCFC1. Homodimer. Component of the SIN3 histone deacetylase (HDAC) corepressor complex. Interacts with SIN3A. Interaction with SIN3B enhances the interaction between SIN3B and HDAC1 to form a complex. Component of a mSin3A corepressor complex that contains SIN3A, SAP130, SUDS3/SAP45, ARID4B/SAP180, HDAC1 and HDAC2. Interacts with USP17L2; the interaction is direct. Interacts with FOXK2. In terms of processing, polyubiquitinated. 'Lys-63'-polyubiquitinated SUDS3 positively regulates histone deacetylation. Regulated through deubiquitination by USP17L2/USP17 that cleaves 'Lys-63'-linked ubiquitin chains.

The protein localises to the nucleus. Its function is as follows. Regulatory protein which represses transcription and augments histone deacetylase activity of HDAC1. May have a potential role in tumor suppressor pathways through regulation of apoptosis. May function in the assembly and/or enzymatic activity of the mSin3A corepressor complex or in mediating interactions between the complex and other regulatory complexes. The chain is Sin3 histone deacetylase corepressor complex component SDS3 (SUDS3) from Pongo abelii (Sumatran orangutan).